The chain runs to 169 residues: Cell division inhibitor SulA (169 aa).

The interval 1–22 (MHTSIYANRSTSFSPSAGNDTQ) is disordered. The interval 106 to 112 (ALRTGNY) is ftsZ binding. A lon protease binding region spans residues 162 to 169 (KIHSNLYH).

Belongs to the SulA family. In terms of assembly, interacts with FtsZ. In terms of processing, is rapidly cleaved and degraded by the Lon protease once DNA damage is repaired.

Component of the SOS system and an inhibitor of cell division. Accumulation of SulA causes rapid cessation of cell division and the appearance of long, non-septate filaments. In the presence of GTP, binds a polymerization-competent form of FtsZ in a 1:1 ratio, thus inhibiting FtsZ polymerization and therefore preventing it from participating in the assembly of the Z ring. This mechanism prevents the premature segregation of damaged DNA to daughter cells during cell division. The sequence is that of Cell division inhibitor SulA from Enterobacter sp. (strain 638).